The sequence spans 142 residues: Acetyltransferase SG1711 (142 aa).

In terms of domain architecture, N-acetyltransferase spans 1–142 (MEIRVFRHDD…GKRLIEDQEY (142 aa)).

It belongs to the acetyltransferase family. YpeA subfamily.

The protein is Acetyltransferase SG1711 of Sodalis glossinidius (strain morsitans).